We begin with the raw amino-acid sequence, 348 residues long: MPHIDNDVKLDFKDVLLRPKRSTLKSRSEVELTRSFSFRNSKQMYSGIPVIAANMDTVGTFEMARVLCKFSLFTAIHKHYSIHQWQEFASQNPDCLECLAASSGSGSADFEQLEQILEAIPQVKYICLDVANGYSEHFVEFVKDVRKRFPQHTIMAGNVVTGEMVEELILSGADIIKVGIGPGSVCTTRKKTGVGYPQLSAVMECADAAHGLKGHIISDGGCSCPGDVAKAFGAGADFVMLGGMLAGHSESGGELIERDGKKYKLFYGMSSEMAMKKYSGGVAEYRASEGKIVEVPFKGDVEHTIRDILGGIRSTCTYVGAAKLKELSRRTTFIRVTQQVNPIFSNSQ.

NADP(+)-binding positions include 26–27, K78, 129–131, and 180–181; these read SR, DVA, and IG. K(+) contacts are provided by G181, G183, and C186. C186 acts as the Thioimidate intermediate in catalysis. T188 serves as the catalytic Proton donor/acceptor. R189 is a K(+) binding site. GMP contacts are provided by residues 219-221, 242-243, 268-270, and 286-290; these read DGG, GG, GMS, and RASEG. NADP(+) contacts are provided by residues M269 and 285 to 286; that span reads YR. K291 is modified (N6-acetyllysine). 314–317 lines the NADP(+) pocket; that stretch reads STCT.

It belongs to the IMPDH/GMPR family. GuaC type 1 subfamily. Homotetramer.

The catalysed reaction is IMP + NH4(+) + NADP(+) = GMP + NADPH + 2 H(+). In terms of biological role, catalyzes the irreversible NADPH-dependent deamination of GMP to IMP. It functions in the conversion of nucleobase, nucleoside and nucleotide derivatives of G to A nucleotides, and in maintaining the intracellular balance of A and G nucleotides. Plays a role in modulating cellular differentiation. The polypeptide is GMP reductase 2 (Mus musculus (Mouse)).